We begin with the raw amino-acid sequence, 241 residues long: Large ribosomal subunit protein eL32 (241 aa).

The segment covering M1–E16 has biased composition (acidic residues). Disordered stretches follow at residues M1–Q47 and V68–G182. Positions E29–G44 are enriched in basic and acidic residues. A compositionally biased stretch (acidic residues) spans V73 to T96. Basic and acidic residues predominate over residues L103–R116. Residues D133–K159 show a composition bias toward basic residues.

Belongs to the eukaryotic ribosomal protein eL32 family. Part of the 50S ribosomal subunit. Interacts weakly with protein L15.

Its function is as follows. Binds to the 23S rRNA. In Haloarcula marismortui (strain ATCC 43049 / DSM 3752 / JCM 8966 / VKM B-1809) (Halobacterium marismortui), this protein is Large ribosomal subunit protein eL32 (rpl32e).